Consider the following 404-residue polypeptide: MKLPIYLDYSATTPVDPRVAQKMSECLLVDGNFGNPASRSHVFGWKAEEAVENARRQVADLVNADPREIVWTSGATESDNLAIKGAAHFYATKGKHLITTKIEHKAVLDTMRQLEREGFEVTYLEPTTDGIVTPAMIEAALREDTILVSVIHVNNEIGTINDIAAIGELTRSKGILLHVDAAQSTGKVDIDLSKLKVDLMSFSAHKTYGPKGIGALYVSRKPRVRIEATMHGGGHERGMRSGTLATHQIVGMGEAFRVAKEDMAAENVRIKALSDRFYKQVENLEELYINGSMTARVPHNLNLSFNYVEGESLIMALKDLAVSSGSACTSASLEPSYVLRALGRNDELAHSSIRFTFGRFTTEEQVDYAAQKVCEAVNKLRVLSPLWDMYKDGVDISKIEWAAH.

Residues 75-76 (AT), Asn155, Gln183, and 203-205 (SAH) contribute to the pyridoxal 5'-phosphate site. N6-(pyridoxal phosphate)lysine is present on Lys206. Thr243 is a pyridoxal 5'-phosphate binding site. The active-site Cysteine persulfide intermediate is Cys328. Residue Cys328 coordinates [2Fe-2S] cluster.

The protein belongs to the class-V pyridoxal-phosphate-dependent aminotransferase family. NifS/IscS subfamily. In terms of assembly, homodimer. Forms a heterotetramer with IscU, interacts with other sulfur acceptors. Requires pyridoxal 5'-phosphate as cofactor.

The protein resides in the cytoplasm. It carries out the reaction (sulfur carrier)-H + L-cysteine = (sulfur carrier)-SH + L-alanine. It participates in cofactor biosynthesis; iron-sulfur cluster biosynthesis. Functionally, master enzyme that delivers sulfur to a number of partners involved in Fe-S cluster assembly, tRNA modification or cofactor biosynthesis. Catalyzes the removal of elemental sulfur atoms from cysteine to produce alanine. Functions as a sulfur delivery protein for Fe-S cluster synthesis onto IscU, an Fe-S scaffold assembly protein, as well as other S acceptor proteins. This is Cysteine desulfurase IscS from Pseudomonas fluorescens (strain SBW25).